The primary structure comprises 1055 residues: Vacuolar protein sorting-associated protein 54 (1055 aa).

The stretch at 363 to 383 (TKKIIEVHQKYEQKKHLLAKL) forms a coiled coil. The disordered stretch occupies residues 774-794 (IDDGPTKKPFKRTGSSATIDS).

Belongs to the VPS54 family. As to quaternary structure, component of the Golgi-associated retrograde protein (GARP) complex, also called VFT (VPS fifty-three) complex, composed of VPS51, VPS52, VPS53 and VPS54.

It localises to the golgi apparatus. The protein resides in the trans-Golgi network. Acts as a component of the GARP complex that is involved in retrograde transport from early and late endosomes to the trans-Golgi network (TGN). The GARP complex facilitates tethering as well as SNARE complex assembly at the Golgi. The chain is Vacuolar protein sorting-associated protein 54 (vps-54) from Caenorhabditis briggsae.